A 473-amino-acid polypeptide reads, in one-letter code: Photosystem II CP43 reaction center protein (473 aa).

A propeptide spanning residues 1–14 (MKILYSLRRFYHVE) is cleaved from the precursor. At threonine 15 the chain carries N-acetylthreonine. A Phosphothreonine modification is found at threonine 15. Transmembrane regions (helical) follow at residues 69 to 93 (LFEV…PHLA), 134 to 155 (LLGP…KDRN), 178 to 200 (KALY…RKIT), 255 to 275 (KPFA…LSYS), and 291 to 312 (WFNN…ASQA). Glutamate 367 contacts [CaMn4O5] cluster. A helical transmembrane segment spans residues 447 to 471 (RARAAAAGFEKGIDRDLEPVLYMTP).

It belongs to the PsbB/PsbC family. PsbC subfamily. In terms of assembly, PSII is composed of 1 copy each of membrane proteins PsbA, PsbB, PsbC, PsbD, PsbE, PsbF, PsbH, PsbI, PsbJ, PsbK, PsbL, PsbM, PsbT, PsbX, PsbY, PsbZ, Psb30/Ycf12, at least 3 peripheral proteins of the oxygen-evolving complex and a large number of cofactors. It forms dimeric complexes. Binds multiple chlorophylls and provides some of the ligands for the Ca-4Mn-5O cluster of the oxygen-evolving complex. It may also provide a ligand for a Cl- that is required for oxygen evolution. PSII binds additional chlorophylls, carotenoids and specific lipids. serves as cofactor.

The protein localises to the plastid. It localises to the chloroplast thylakoid membrane. One of the components of the core complex of photosystem II (PSII). It binds chlorophyll and helps catalyze the primary light-induced photochemical processes of PSII. PSII is a light-driven water:plastoquinone oxidoreductase, using light energy to abstract electrons from H(2)O, generating O(2) and a proton gradient subsequently used for ATP formation. In Saccharum hybrid (Sugarcane), this protein is Photosystem II CP43 reaction center protein.